Consider the following 119-residue polypeptide: Odin profilin (119 aa).

It belongs to the Asgard profilin family.

Its subcellular location is the cytoplasm. The protein localises to the cytoskeleton. Its activity is regulated as follows. Inhibition of rabbit actin polymerization is reduced by phosphatidylinositol-(4,5)-P2(1,2-dipalmitoyl), a soluble form of the phospholipid phosphatidylinositol, suggesting an unknown lipid might regulate actin-profilin interaction in vivo. Binds to actin and affects the structure of the cytoskeleton. At high concentrations inhibits spontaneous rabbit actin nucleation. This strongly suggests this archaea has a profilin-regulated actin system, and actin-type genes can be identified in this organism. In Odinarchaeota yellowstonii (strain LCB_4), this protein is Odin profilin.